Reading from the N-terminus, the 287-residue chain is 4,4'-diapophytoene synthase (287 aa).

Residues 18-21, Tyr41, and Arg45 contribute to the (2E,6E)-farnesyl diphosphate site; that span reads HSKS. 2 residues coordinate Mg(2+): Asp48 and Asp52. (2E,6E)-farnesyl diphosphate is bound at residue Gln165. Mg(2+) is bound at residue Asn168. Arg171 is a (2E,6E)-farnesyl diphosphate binding site. Asp172 contacts Mg(2+). Tyr248 serves as a coordination point for (2E,6E)-farnesyl diphosphate.

Belongs to the phytoene/squalene synthase family. CrtM subfamily. It depends on Mg(2+) as a cofactor.

It catalyses the reaction 2 (2E,6E)-farnesyl diphosphate = 15-cis-4,4'-diapophytoene + 2 diphosphate. Its pathway is carotenoid biosynthesis; staphyloxanthin biosynthesis; staphyloxanthin from farnesyl diphosphate: step 1/5. Functionally, involved in the biosynthesis of the yellow-orange carotenoid staphyloxanthin, which plays a role in the virulence via its protective function against oxidative stress. Catalyzes the head-to-head condensation of two molecules of farnesyl diphosphate (FPP) into the colorless C(30) carotenoid 4,4'-diapophytoene (dehydrosqualene). This chain is 4,4'-diapophytoene synthase (crtM), found in Staphylococcus aureus (strain Mu50 / ATCC 700699).